The following is a 242-amino-acid chain: Type III pantothenate kinase (242 aa).

ATP is bound at residue 7–14 (DLGNSRFK). Residues Tyr-91 and 98 to 101 (GVDR) contribute to the substrate site. The Proton acceptor role is filled by Asp-100. Thr-121 contacts ATP. Thr-171 provides a ligand contact to substrate.

This sequence belongs to the type III pantothenate kinase family. In terms of assembly, homodimer. Requires NH4(+) as cofactor. It depends on K(+) as a cofactor.

The protein localises to the cytoplasm. It catalyses the reaction (R)-pantothenate + ATP = (R)-4'-phosphopantothenate + ADP + H(+). Its pathway is cofactor biosynthesis; coenzyme A biosynthesis; CoA from (R)-pantothenate: step 1/5. In terms of biological role, catalyzes the phosphorylation of pantothenate (Pan), the first step in CoA biosynthesis. The polypeptide is Type III pantothenate kinase (Xylella fastidiosa (strain M23)).